The primary structure comprises 347 residues: 5-deoxyribose 1-phosphate isomerase (347 aa).

Residues 48 to 50, R91, and Q198 each bind substrate; that span reads RGA. The Proton donor role is filled by D239. 249–250 serves as a coordination point for substrate; it reads NK.

It belongs to the EIF-2B alpha/beta/delta subunits family. DrdI subfamily.

It carries out the reaction 5-deoxy-alpha-D-ribose 1-phosphate = 5-deoxy-D-ribulose 1-phosphate. Its pathway is carbohydrate degradation. Catalyzes the isomerization of 5-deoxy-alpha-D-ribose 1-phosphate to 5-deoxy-D-ribulose 1-phosphate, as part of a 5-deoxyribose salvage pathway that recycles this toxic radical SAM enzyme by-product to mainstream metabolites. The sequence is that of 5-deoxyribose 1-phosphate isomerase from Petrotoga mobilis (strain DSM 10674 / SJ95).